The chain runs to 312 residues: Plasma membrane-associated coenzyme Q6 reductase PGA3 (312 aa).

At 1–15 (MSKEDIEGTNILDEP) the chain is on the extracellular side. A helical transmembrane segment spans residues 16-36 (VHGIYIPAALFVVGVAITTYM). The Cytoplasmic segment spans residues 37 to 39 (SGE). A helical membrane pass occupies residues 40–60 (LKILWSLPILFMIIFVRAYSA). Over 61–179 (YKRRRSLYPD…LNYEPNSSKH (119 aa)) the chain is Extracellular. An FAD-binding FR-type domain is found at 70–173 (DRWTSLELED…KGPIGTLNYE (104 aa)). FAD contacts are provided by residues 153 to 168 (AGLN…GPIG) and 179 to 211 (HLGI…KVSL). Residues 180–200 (LGIVAGGSGITPVLQILNEII) form a helical membrane-spanning segment. Topologically, residues 201-312 (TVPEDLTKVS…SSGDDQVFVF (112 aa)) are cytoplasmic.

This sequence belongs to the flavoprotein pyridine nucleotide cytochrome reductase family. FAD serves as cofactor.

It is found in the cell membrane. The protein resides in the endoplasmic reticulum membrane. It catalyses the reaction 2 Fe(III)-[cytochrome b5] + NADH = 2 Fe(II)-[cytochrome b5] + NAD(+) + H(+). Its activity is regulated as follows. Inhibited by diphenylene iodonium (DPI). Its function is as follows. NADH-dependent cytochrome b5 reductase that reduces coenzyme Q6 at the plasma membrane and mediates lifespan extension by calorie restriction by shifting fermentative to respiratory metabolism, probably through modulating the NAD(+)/NADH ratio. In Saccharomyces cerevisiae (strain ATCC 204508 / S288c) (Baker's yeast), this protein is Plasma membrane-associated coenzyme Q6 reductase PGA3 (PGA3).